Consider the following 389-residue polypeptide: Ecto-ADP-ribosyltransferase 3 (389 aa).

A signal peptide spans 1 to 26 (MKTGHFEIVTMLLATMILVDIFQVKA). C43 and C256 are disulfide-bonded. Residues 64-251 (QQLDTVWENA…LILQSINKTC (188 aa)) enclose the TR mART core domain. Y101 and R163 together coordinate NAD(+). N-linked (GlcNAc...) asparagine glycosylation is present at N248. 3 repeat units span residues 283 to 292 (GEKNQKLEDH), 293 to 302 (SEKNWKLEDH), and 303 to 312 (GEKNQKLEDH). The tract at residues 283-312 (GEKNQKLEDHSEKNWKLEDHGEKNQKLEDH) is 3 X 10 AA tandem repeats of [GS]-E-K-N-[QW]-K-L-E-D-H. Positions 325-362 (MKIPEPFPLPEDKSQGNINNPTPGPVPVPGPKSHPSAS) are disordered. O-linked (GalNAc...) threonine glycosylation is present at T346. Over residues 346–356 (TPGPVPVPGPK) the composition is skewed to pro residues. The GPI-anchor amidated serine moiety is linked to residue S362. Residues 363 to 389 (SGKLLLPQFGMVIILISVSAINLFVAL) constitute a propeptide, removed in mature form.

This sequence belongs to the Arg-specific ADP-ribosyltransferase family. Post-translationally, O-glycosylated with core 1 or possibly core 8 glycans. Testis specific.

It localises to the cell membrane. The enzyme catalyses L-arginyl-[protein] + NAD(+) = N(omega)-(ADP-D-ribosyl)-L-arginyl-[protein] + nicotinamide + H(+). The sequence is that of Ecto-ADP-ribosyltransferase 3 (ART3) from Homo sapiens (Human).